The following is a 472-amino-acid chain: Deoxyribodipyrimidine photo-lyase (472 aa).

In terms of domain architecture, Photolyase/cryptochrome alpha/beta spans 2 to 134 (TTHLVWFRQD…VCEGFDDSVI (133 aa)). (6R)-5,10-methylene-5,6,7,8-tetrahydrofolate contacts are provided by N109 and E110. An FAD-binding site is contributed by Y223. R227 contributes to the DNA binding site. FAD contacts are provided by residues 235 to 239 (TSRLS), W272, and 275 to 282 (ELIWREFY). 2 interaction with DNA regions span residues 275–282 (ELIWREFY) and 342–343 (NR). 373-375 (DGD) is a binding site for FAD. Q405 contributes to the DNA binding site.

This sequence belongs to the DNA photolyase class-1 family. In terms of assembly, monomer. Requires FAD as cofactor. It depends on (6R)-5,10-methylene-5,6,7,8-tetrahydrofolate as a cofactor.

It carries out the reaction cyclobutadipyrimidine (in DNA) = 2 pyrimidine residues (in DNA).. Its function is as follows. Involved in repair of UV radiation-induced DNA damage. Catalyzes the light-dependent monomerization (300-600 nm) of cyclobutyl pyrimidine dimers (in cis-syn configuration), which are formed between adjacent bases on the same DNA strand upon exposure to ultraviolet radiation. The protein is Deoxyribodipyrimidine photo-lyase (phrB) of Escherichia coli (strain K12).